The sequence spans 278 residues: FALAHMVNDFDIMKSYLDEGANGIETDITFSPEGEPESAFHGVPCDCKRWCDRTVSFDSYLQKTSDLSTPGHPDYRENLLIIILELKLNGLSQDALANGGRRLADKLAAHFWTGGRRDQRATFVVSVPQTSQKVFMKTFREEMEAIGMGDMNAKVGFDFTDNGDVSVTKAVYDELGITEHIWASDGITNCVALLFRGTSRLEELIQKRDEGESTYISKVYAWTYDKETSVVLALELGVDGVMTNYADFVISILNKPEHSSKYRLATYEDDPFERFKAV.

Histidine 5 is a catalytic residue. Residues glutamate 25 and aspartate 27 each contribute to the Mg(2+) site. Histidine 41 functions as the Nucleophile in the catalytic mechanism. Cystine bridges form between cysteine 45-cysteine 51 and cysteine 47-cysteine 190. Glutamate 85 provides a ligand contact to Mg(2+).

Belongs to the arthropod phospholipase D family. Class II subfamily. Requires Mg(2+) as cofactor. In terms of tissue distribution, expressed by the venom gland.

Its subcellular location is the secreted. The catalysed reaction is an N-(acyl)-sphingosylphosphocholine = an N-(acyl)-sphingosyl-1,3-cyclic phosphate + choline. The enzyme catalyses an N-(acyl)-sphingosylphosphoethanolamine = an N-(acyl)-sphingosyl-1,3-cyclic phosphate + ethanolamine. It carries out the reaction a 1-acyl-sn-glycero-3-phosphocholine = a 1-acyl-sn-glycero-2,3-cyclic phosphate + choline. It catalyses the reaction a 1-acyl-sn-glycero-3-phosphoethanolamine = a 1-acyl-sn-glycero-2,3-cyclic phosphate + ethanolamine. In terms of biological role, dermonecrotic toxins cleave the phosphodiester linkage between the phosphate and headgroup of certain phospholipids (sphingolipid and lysolipid substrates), forming an alcohol (often choline) and a cyclic phosphate. This toxin acts on sphingomyelin (SM). It may also act on ceramide phosphoethanolamine (CPE), lysophosphatidylcholine (LPC) and lysophosphatidylethanolamine (LPE), but not on lysophosphatidylserine (LPS), and lysophosphatidylglycerol (LPG). It acts by transphosphatidylation, releasing exclusively cyclic phosphate products as second products. Induces dermonecrosis, hemolysis, increased vascular permeability, edema, inflammatory response, and platelet aggregation. This Loxosceles spinulosa (Recluse spider) protein is Dermonecrotic toxin LspiSicTox-betaIE2i.